A 629-amino-acid polypeptide reads, in one-letter code: Chaperone protein DnaK (629 aa).

Residues 576–587 (QAYQQQQDAQAG) show a composition bias toward low complexity. The disordered stretch occupies residues 576–629 (QAYQQQQDAQAGAAGGAGGMGGMGGMADGPGGAADADGDDEEYVDADFEDVDEE). Gly residues predominate over residues 588–607 (AAGGAGGMGGMGGMADGPGG). Acidic residues predominate over residues 611 to 629 (ADGDDEEYVDADFEDVDEE).

Belongs to the heat shock protein 70 family.

Acts as a chaperone. The chain is Chaperone protein DnaK from Halobacterium salinarum (strain ATCC 29341 / DSM 671 / R1).